A 580-amino-acid polypeptide reads, in one-letter code: Guanine nucleotide-binding protein alpha-4 subunit (580 aa).

Residues 1–10 show a composition bias toward polar residues; it reads MSPSVSSPQL. The tract at residues 1–28 is disordered; the sequence is MSPSVSSPQLRHTKSNRAISRIDRTDPL. One can recognise a G-alpha domain in the interval 93–579; that stretch reads RVYKMVLLGQ…RENLKLTGLV (487 aa). Residues 96 to 109 are G1 motif; that stretch reads KMVLLGQAGAGKTT. 101 to 108 contributes to the GTP binding site; that stretch reads GQAGAGKT. Disordered stretches follow at residues 160–196 and 302–325; these read KSSE…PNDA and GRAA…KDNS. Residues 167 to 183 show a composition bias toward low complexity; sequence LESSTSASTSTSASASS. The tract at residues 387-395 is G2 motif; that stretch reads DILHSRVRT. Residues 389-395, 415-419, 484-487, and alanine 551 contribute to the GTP site; these read LHSRVRT, DVGGS, and NKID. Threonine 395 is a Mg(2+) binding site. Residues 411–420 form a G3 motif region; it reads YRIYDVGGSR. The segment at 480–487 is G4 motif; it reads ILFLNKID. Residues 549–554 are G5 motif; sequence TVATST.

Belongs to the G-alpha family. In terms of assembly, g proteins are composed of 3 units; alpha, beta and gamma. The alpha chain contains the guanine nucleotide binding site.

Functionally, guanine nucleotide-binding proteins (G proteins) are involved as modulators or transducers in various transmembrane signaling systems. This Mycosarcoma maydis (Corn smut fungus) protein is Guanine nucleotide-binding protein alpha-4 subunit (GPA4).